The following is a 189-amino-acid chain: Glutathione-dependent formaldehyde-activating enzyme (189 aa).

The region spanning 20–167 (FAGGTLVCKC…LKELGLEPYD (148 aa)) is the CENP-V/GFA domain. Positions 27, 29, 48, 50, 53, 95, and 98 each coordinate Zn(2+).

This sequence belongs to the Gfa family. It depends on Zn(2+) as a cofactor.

It catalyses the reaction S-(hydroxymethyl)glutathione = glutathione + formaldehyde. It participates in one-carbon metabolism; formaldehyde degradation; formate from formaldehyde (glutathione route): step 1/3. Functionally, catalyzes the condensation of formaldehyde and glutathione to S-hydroxymethylglutathione. In Rhodopseudomonas palustris (strain BisB18), this protein is Glutathione-dependent formaldehyde-activating enzyme.